A 214-amino-acid polypeptide reads, in one-letter code: Response regulator GacA (214 aa).

A Response regulatory domain is found at 3–119; sequence KVLVVDDHDL…EMVQAIRQVF (117 aa). 4-aspartylphosphate is present on aspartate 54. The HTH luxR-type domain maps to 143–208; the sequence is HDSPFDSLSE…ELALLAVRHG (66 aa). The segment at residues 167–186 is a DNA-binding region (H-T-H motif); the sequence is VQSISDKLCLSPKTVNTYRY.

In terms of biological role, positively controls the production of the autoinducer N-butyryl-homoserine lactone and the formation of the virulence factors pyocyanine, cyanide, and lipase. The polypeptide is Response regulator GacA (gacA) (Pseudomonas aeruginosa (strain ATCC 15692 / DSM 22644 / CIP 104116 / JCM 14847 / LMG 12228 / 1C / PRS 101 / PAO1)).